The primary structure comprises 1077 residues: TSC22 domain family protein 1 (1077 aa).

Positions 1 to 98 (MHQPPESTAA…SQAQLQGQPL (98 aa)) are required for interaction with TGFBR1 and promotion of TGF-beta signaling. Disordered stretches follow at residues 22-112 (MAHP…SGFQ), 125-283 (ISSN…VPSS), 458-492 (QTPT…SVGS), 842-874 (SSAA…GSLV), and 909-947 (QAIG…SDGS). A compositionally biased stretch (pro residues) spans 58 to 70 (FPPPSLLQPPPPA). A compositionally biased stretch (low complexity) spans 84–96 (SLNLLSQAQLQGQ). Positions 133–142 (EDTESYDDLD) are enriched in acidic residues. Basic residues predominate over residues 216–240 (HPHHLHHHHHPHHGHHLHHGHHHSS). Phosphoserine is present on S263. Residues 471–489 (TSGSSVSSSVSTLSHYTES) are compositionally biased toward low complexity. The span at 852–874 (VPTNLVPPQNIAQPPATQNGSLV) shows a compositional bias: polar residues. The segment covering 933–947 (MSGDSGGMSAVSDGS) has biased composition (low complexity). Residues 1010–1031 (LKEQIKELIEKNSQLEQENNLL) form a leucine-zipper region. The segment at 1042–1077 (QFQAQLQTGSPPATTQPQGTTQPPAQPASQGSGSTA) is disordered. Residues 1048-1077 (QTGSPPATTQPQGTTQPPAQPASQGSGSTA) are compositionally biased toward low complexity.

Belongs to the TSC-22/Dip/Bun family. Forms homodimers. Forms heterodimers. Component of a complex composed of TSC22D1 (via N-terminus), TGFBR1 and TGFBR2; the interaction between TSC22D1 and TGFBR1 is inhibited by SMAD7 and promoted by TGFB1. Interacts with SMAD7; the interaction requires TGF-beta and the interaction is inhibited by TGFBR1. Interacts with TPT1/fortilin; interaction results in the destabilization of TSC22D1 protein and prevents TSC22D1-mediated apoptosis. Interacts with SMAD4 (via N-terminus). Interacts with ACVRL1/ALK1, ACVR1/ALK2, BMPR1A/ALK3, ACVR1B/ALK4, BMPR1B/ALK6, ACVR2A/ACTRII, and BMPR2. Interacts with SMAD6. Interacts with TFE3; the interaction is enhanced in the presence of TGF-beta. In terms of assembly, forms a heterodimer with TSC22D4/THG1. As to quaternary structure, forms a heterodimer with TSC22D4/THG1. Interacts with histone H1-2. Interacts with GNL3. In terms of tissue distribution, expressed in bone marrow cells (at protein level). Expressed in T-cells. Expressed in the brain. Expressed in the myoepithelial cells of the mammary gland ducts and alveoli, expression is consistent throughout pregnancy, lactation and involution (at protein level). Expressed in the cortex, medulla and papilla of the kidney. As to expression, expressed in the myoepithelial cells of the mammary gland, expression significantly increases in the secretory luminal epithelium of the mammary gland at the initiation of involution, with levels decreasing from day 3 of involution onwards (at protein level). Expressed in the cortex, medulla and papilla of the kidney.

It localises to the cytoplasm. Its subcellular location is the nucleus. The protein localises to the cell membrane. It is found in the mitochondrion. Transcriptional repressor. Acts on the C-type natriuretic peptide (CNP) promoter. Acts to promote CASP3-mediated apoptosis. Positively regulates TGF-beta signaling by interacting with SMAD7 which inhibits binding of SMAD7 to TGFBR1, preventing recruitment of SMURF ubiquitin ligases to TGFBR1 and inhibiting SMURF-mediated ubiquitination and degradation of TGFBR1. Contributes to enhancement of TGF-beta signaling by binding to and modulating the transcription activator activity of SMAD4. Promotes TGF-beta-induced transcription of COL1A2; via its interaction with TFE3 at E-boxes in the gene proximal promoter. Plays a role in the repression of hematopoietic precursor cell growth. Promotes IL2 deprivation-induced apoptosis in T-lymphocytes, via repression of TSC22D3/GILZ transcription and activation of the caspase cascade. In terms of biological role, may act to negatively regulate TGFB3 signaling and thereby inhibit cell death in mammary gland cells. Functionally, positively regulates cell death in response to TGFB3 during mammary gland involution. The polypeptide is TSC22 domain family protein 1 (Mus musculus (Mouse)).